We begin with the raw amino-acid sequence, 683 residues long: Amino acid transporter heavy chain SLC3A1 (683 aa).

A compositionally biased stretch (basic and acidic residues) spans M1–S10. The disordered stretch occupies residues M1–A50. Residues M1 to L86 lie on the Cytoplasmic side of the membrane. Phosphoserine is present on S10. A helical; Signal-anchor for type II membrane protein transmembrane segment spans residues F87–I107. At S108–C683 the chain is on the extracellular side. N211 contacts Ca(2+). Residues N211, N238, and N258 are each glycosylated (N-linked (GlcNAc...) asparagine). An intrachain disulfide couples C239 to C270. Ca(2+) is bound by residues D281, F315, L316, and E318. An N-linked (GlcNAc...) asparagine glycan is attached at N329. A Phosphoserine modification is found at S383. 3 N-linked (GlcNAc...) asparagine glycosylation sites follow: N510, N520, and N574. 2 disulfides stabilise this stretch: C568–C664 and C671–C683.

Disulfide-linked heterodimer composed of the catalytic light subunit SLC7A9 and the heavy subunit SLC3A1. The heterodimer is the minimal functional unit. Assembles in non-covalently linked heterotetramers (dimers of heterodimers) and higher order oligomers; the oligomerization is mediated by SLC3A1 likely to prevent degradation in the endoplasmic reticulum and facilitate heteromer trafficking to the plasma membrane. Disulfide-linked heterodimer composed of the catalytic light subunit SLC7A13 and the heavy subunit SLC3A1. In terms of tissue distribution, predominantly expressed in kidney and intestine. In kidney localized to the apical membrane of the proximal tubules.

It localises to the cell membrane. The protein localises to the apical cell membrane. Its function is as follows. Acts as a chaperone that facilitates biogenesis and trafficking of functional transporter heteromers to the plasma membrane. Associates with SLC7A9 to form a functional transporter complex that mediates the electrogenic exchange between cationic amino acids and neutral amino acids, with a stoichiometry of 1:1. SLC7A9-SLC3A1 transporter has system b(0,+)-like activity with high affinity for extracellular cationic amino acids and L-cystine and lower affinity for intracellular neutral amino acids. Substrate exchange is driven by high concentration of intracellular neutral amino acids and the intracellular reduction of L-cystine to L-cysteine. SLC7A9-SLC3A1 acts as a major transporter for reabsorption of L-cystine and dibasic amino acids across the brush border membrane in early proximal tubules. Associates with SLC7A13 to form a functional complex that transports anionic and neutral amino acids via exchange or facilitated diffusion. SLC7A13-SLC3A1 may act as a major transporter for L-cystine in late proximal tubules, ensuring its reabsorption from the luminal fluid in exchange for cytosolic L-glutamate or L-aspartate. The sequence is that of Amino acid transporter heavy chain SLC3A1 (Slc3a1) from Rattus norvegicus (Rat).